A 1203-amino-acid polypeptide reads, in one-letter code: DNA-directed RNA polymerase subunit beta' (1203 aa).

Positions 60, 62, 75, and 78 each coordinate Zn(2+). Mg(2+)-binding residues include D449, D451, and D453. Zn(2+) is bound by residues C818, C892, C899, and C902.

The protein belongs to the RNA polymerase beta' chain family. In terms of assembly, the RNAP catalytic core consists of 2 alpha, 1 beta, 1 beta' and 1 omega subunit. When a sigma factor is associated with the core the holoenzyme is formed, which can initiate transcription. It depends on Mg(2+) as a cofactor. The cofactor is Zn(2+).

It catalyses the reaction RNA(n) + a ribonucleoside 5'-triphosphate = RNA(n+1) + diphosphate. Functionally, DNA-dependent RNA polymerase catalyzes the transcription of DNA into RNA using the four ribonucleoside triphosphates as substrates. The protein is DNA-directed RNA polymerase subunit beta' of Bacillus cereus (strain ZK / E33L).